The following is a 196-amino-acid chain: Large ribosomal subunit protein bL25 (196 aa).

It belongs to the bacterial ribosomal protein bL25 family. CTC subfamily. Part of the 50S ribosomal subunit; part of the 5S rRNA/L5/L18/L25 subcomplex. Contacts the 5S rRNA. Binds to the 5S rRNA independently of L5 and L18.

This is one of the proteins that binds to the 5S RNA in the ribosome where it forms part of the central protuberance. In Amoebophilus asiaticus (strain 5a2), this protein is Large ribosomal subunit protein bL25.